A 115-amino-acid polypeptide reads, in one-letter code: Large ribosomal subunit protein bL20c (115 aa).

This sequence belongs to the bacterial ribosomal protein bL20 family.

It is found in the plastid. The protein localises to the chloroplast. Its function is as follows. Binds directly to 23S ribosomal RNA and is necessary for the in vitro assembly process of the 50S ribosomal subunit. It is not involved in the protein synthesizing functions of that subunit. This chain is Large ribosomal subunit protein bL20c, found in Chlorokybus atmophyticus (Soil alga).